We begin with the raw amino-acid sequence, 1256 residues long: SNF2 domain-containing protein CLASSY 1 (1256 aa).

2 disordered regions span residues 269 to 290 (ELRR…EIQP) and 448 to 467 (GNVV…VSRE). The span at 278-290 (GRPERYGDSEIQP) shows a compositional bias: basic and acidic residues. A compositionally biased stretch (basic residues) spans 451–463 (VHKRNGPHSRIRS). The Helicase ATP-binding domain maps to 699 to 898 (DPSSDKIGGC…FNTLCLARPK (200 aa)). Residue 712 to 719 (HTPGAGKT) participates in ATP binding. The DEAH box signature appears at 849-852 (DEGH). Positions 1061–1222 (FVLNLVFRVV…EFVEDPSQWQ (162 aa)) constitute a Helicase C-terminal domain.

It belongs to the helicase family. In terms of assembly, interacts with NRPD1, NRPD3 and SHH1.

Its subcellular location is the nucleus. It localises to the nucleoplasm. It is found in the nucleolus. Functionally, probable chromatin remodeling factor. Required for the initial establishment of DNA methylation and for accumulation of 24-nt siRNAs. May act on RNA templates by remodeling ribonucleoprotein structures and thereby influencing the availability of the RNA to polymerases. This Arabidopsis thaliana (Mouse-ear cress) protein is SNF2 domain-containing protein CLASSY 1 (CLSY1).